The chain runs to 99 residues: Large ribosomal subunit protein uL23 (99 aa).

Belongs to the universal ribosomal protein uL23 family. As to quaternary structure, part of the 50S ribosomal subunit. Contacts protein L29, and trigger factor when it is bound to the ribosome.

In terms of biological role, one of the early assembly proteins it binds 23S rRNA. One of the proteins that surrounds the polypeptide exit tunnel on the outside of the ribosome. Forms the main docking site for trigger factor binding to the ribosome. The polypeptide is Large ribosomal subunit protein uL23 (Pseudomonas aeruginosa (strain LESB58)).